The chain runs to 445 residues: Tubulin beta-3 chain (445 aa).

GTP-binding residues include Gln-11, Glu-69, Ser-138, Gly-142, Thr-143, Gly-144, Asn-204, and Asn-226. Mg(2+) is bound at residue Glu-69. The tract at residues 421–445 (EYQQYQDATADEEEEYDEEEEEEAA) is disordered. A compositionally biased stretch (acidic residues) spans 429-445 (TADEEEEYDEEEEEEAA).

This sequence belongs to the tubulin family. In terms of assembly, dimer of alpha and beta chains. A typical microtubule is a hollow water-filled tube with an outer diameter of 25 nm and an inner diameter of 15 nM. Alpha-beta heterodimers associate head-to-tail to form protofilaments running lengthwise along the microtubule wall with the beta-tubulin subunit facing the microtubule plus end conferring a structural polarity. Microtubules usually have 13 protofilaments but different protofilament numbers can be found in some organisms and specialized cells. The cofactor is Mg(2+).

Its subcellular location is the cytoplasm. It is found in the cytoskeleton. Tubulin is the major constituent of microtubules, a cylinder consisting of laterally associated linear protofilaments composed of alpha- and beta-tubulin heterodimers. Microtubules grow by the addition of GTP-tubulin dimers to the microtubule end, where a stabilizing cap forms. Below the cap, tubulin dimers are in GDP-bound state, owing to GTPase activity of alpha-tubulin. In Triticum aestivum (Wheat), this protein is Tubulin beta-3 chain (TUBB3).